We begin with the raw amino-acid sequence, 122 residues long: Large ribosomal subunit protein uL14 (122 aa).

It belongs to the universal ribosomal protein uL14 family. As to quaternary structure, part of the 50S ribosomal subunit. Forms a cluster with proteins L3 and L19. In the 70S ribosome, L14 and L19 interact and together make contacts with the 16S rRNA in bridges B5 and B8.

In terms of biological role, binds to 23S rRNA. Forms part of two intersubunit bridges in the 70S ribosome. The polypeptide is Large ribosomal subunit protein uL14 (Streptococcus uberis (strain ATCC BAA-854 / 0140J)).